The primary structure comprises 75 residues: SPbeta prophage-derived uncharacterized protein YomT (75 aa).

This chain is SPbeta prophage-derived uncharacterized protein YomT (yomT), found in Bacillus subtilis (strain 168).